A 234-amino-acid polypeptide reads, in one-letter code: MNQLVDPKVVIALDYQDKQQALHFISQLDPKHCRLKVGKEMFTHFGPEFVKQLVAKEFDVFLDLKFHDIPNTVASAVKVAADLGVWMVNVHASGGRRMMEAAKKILEPYGTNAPLLIAVTVLTSMDQSDLQELGIELSPAEQVKRLAKLAKLSGLDGVVCSAHEAQELKTLLGAEFKLITPGIRPMGSDAGDQRRIMTPKQAIDAGSDYLVIGRPITRATNPVEVLKNINDSLV.

Substrate contacts are provided by residues Asp14, Lys36, 63 to 72 (DLKFHDIPNT), Thr123, Arg184, Gln193, Gly213, and Arg214. The active-site Proton donor is Lys65.

It belongs to the OMP decarboxylase family. Type 1 subfamily. In terms of assembly, homodimer.

It carries out the reaction orotidine 5'-phosphate + H(+) = UMP + CO2. It functions in the pathway pyrimidine metabolism; UMP biosynthesis via de novo pathway; UMP from orotate: step 2/2. Catalyzes the decarboxylation of orotidine 5'-monophosphate (OMP) to uridine 5'-monophosphate (UMP). The sequence is that of Orotidine 5'-phosphate decarboxylase from Psychromonas ingrahamii (strain DSM 17664 / CCUG 51855 / 37).